Here is a 576-residue protein sequence, read N- to C-terminus: Sulfite reductase [NADPH] hemoprotein beta-component (576 aa).

[4Fe-4S] cluster is bound by residues cysteine 435, cysteine 441, cysteine 480, and cysteine 484. Cysteine 484 lines the siroheme pocket.

It belongs to the nitrite and sulfite reductase 4Fe-4S domain family. In terms of assembly, alpha(8)-beta(8). The alpha component is a flavoprotein, the beta component is a hemoprotein. Siroheme serves as cofactor. [4Fe-4S] cluster is required as a cofactor.

It catalyses the reaction hydrogen sulfide + 3 NADP(+) + 3 H2O = sulfite + 3 NADPH + 4 H(+). The protein operates within sulfur metabolism; hydrogen sulfide biosynthesis; hydrogen sulfide from sulfite (NADPH route): step 1/1. In terms of biological role, component of the sulfite reductase complex that catalyzes the 6-electron reduction of sulfite to sulfide. This is one of several activities required for the biosynthesis of L-cysteine from sulfate. The protein is Sulfite reductase [NADPH] hemoprotein beta-component of Yersinia pseudotuberculosis serotype O:1b (strain IP 31758).